Reading from the N-terminus, the 433-residue chain is Serine--tRNA ligase (433 aa).

235-237 (TSE) lines the L-serine pocket. An ATP-binding site is contributed by 266–268 (RSE). Position 289 (Glu289) interacts with L-serine. Position 353–356 (353–356 (EISS)) interacts with ATP. Ser388 contributes to the L-serine binding site.

It belongs to the class-II aminoacyl-tRNA synthetase family. Type-1 seryl-tRNA synthetase subfamily. As to quaternary structure, homodimer. The tRNA molecule binds across the dimer.

It localises to the cytoplasm. It catalyses the reaction tRNA(Ser) + L-serine + ATP = L-seryl-tRNA(Ser) + AMP + diphosphate + H(+). It carries out the reaction tRNA(Sec) + L-serine + ATP = L-seryl-tRNA(Sec) + AMP + diphosphate + H(+). Its pathway is aminoacyl-tRNA biosynthesis; selenocysteinyl-tRNA(Sec) biosynthesis; L-seryl-tRNA(Sec) from L-serine and tRNA(Sec): step 1/1. Functionally, catalyzes the attachment of serine to tRNA(Ser). Is also able to aminoacylate tRNA(Sec) with serine, to form the misacylated tRNA L-seryl-tRNA(Sec), which will be further converted into selenocysteinyl-tRNA(Sec). The polypeptide is Serine--tRNA ligase (Burkholderia cepacia (Pseudomonas cepacia)).